The primary structure comprises 488 residues: Histamine H1 receptor (488 aa).

Residues 1–29 (MSLPNTSSASEDKMCEGNRTAMASPQLLP) lie on the Extracellular side of the membrane. Asn-5 and Asn-18 each carry an N-linked (GlcNAc...) asparagine glycan. The chain crosses the membrane as a helical span at residues 30-50 (LVVVLSSISLVTVGLNLLVLY). Residues 51–64 (AVRSERKLHTVGNL) lie on the Cytoplasmic side of the membrane. The helical transmembrane segment at 65-89 (YIVSLSVADLIVGAVVMPMNILYLI) threads the bilayer. Topologically, residues 90–97 (MTKWSLGR) are extracellular. The chain crosses the membrane as a helical span at residues 98-123 (PLCLFWLSMDYVASTASIFSVFILCI). Cys-100 and Cys-180 are oxidised to a cystine. Histamine is bound by residues Asp-107 and Thr-112. Residues 107–112 (DYVAST) are important for agonist binding. At 124–144 (DRYRSVQQPLRYLRYRTKTRA) the chain is on the cytoplasmic side. Phosphothreonine occurs at positions 140 and 142. Residues 145–164 (SATILGAWFLSFLWVIPILG) traverse the membrane as a helical segment. Residues 165 to 188 (WHHFTPLAPELREDKCETDFYNVT) lie on the Extracellular side of the membrane. The helical transmembrane segment at 189-211 (WFKIMTAIINFYLPTLLMLWFYV) threads the bilayer. Asn-198 is a histamine binding site. Over 212–417 (KIYKAVRRHC…LNRERKAAKQ (206 aa)) the chain is Cytoplasmic. Ser-230 is subject to Phosphoserine. The segment at 245–337 (KEGAKKPGKE…SQPKMDEQSL (93 aa)) is disordered. The span at 322–337 (ANDQTLSQPKMDEQSL) shows a compositional bias: polar residues. 6 positions are modified to phosphoserine: Ser-344, Ser-347, Ser-381, Ser-383, Ser-397, and Ser-399. The helical transmembrane segment at 418–441 (LGCIMAAFILCWIPYFIFFMVIAF) threads the bilayer. The tract at residues 425 to 429 (FILCW) is important for agonist binding. Position 432 (Tyr-432) interacts with histamine. Cys-442 and Cys-445 are oxidised to a cystine. At 442-447 (CNSCCS) the chain is on the extracellular side. The helical transmembrane segment at 448–470 (EPVHMFTIWLGYINSTLNPLIYP) threads the bilayer. Residues 471 to 488 (LCNENFKKTFKKILHIRS) are Cytoplasmic-facing.

This sequence belongs to the G-protein coupled receptor 1 family. In terms of processing, phosphorylation at sites in the second and third cytoplasmic loops independently contribute to agonist-induced receptor down-regulation.

The protein localises to the cell membrane. G-protein-coupled receptor for histamine, a biogenic amine that functions as an immune modulator and a neurotransmitter. Through the H1 receptor, histamine mediates the contraction of smooth muscles and increases capillary permeability due to contraction of terminal venules. Also mediates neurotransmission in the central nervous system and thereby regulates circadian rhythms, emotional and locomotor activities as well as cognitive functions. In Mus musculus (Mouse), this protein is Histamine H1 receptor.